We begin with the raw amino-acid sequence, 591 residues long: Aspartate--tRNA(Asp/Asn) ligase (591 aa).

E175 lines the L-aspartate pocket. The tract at residues 199–202 (QQFK) is aspartate. 2 residues coordinate L-aspartate: R221 and H453. Position 221 to 223 (221 to 223 (RDE)) interacts with ATP. An ATP-binding site is contributed by E486. R493 lines the L-aspartate pocket. 538-541 (GIDR) contacts ATP.

Belongs to the class-II aminoacyl-tRNA synthetase family. Type 1 subfamily. In terms of assembly, homodimer.

The protein resides in the cytoplasm. It carries out the reaction tRNA(Asx) + L-aspartate + ATP = L-aspartyl-tRNA(Asx) + AMP + diphosphate. Functionally, aspartyl-tRNA synthetase with relaxed tRNA specificity since it is able to aspartylate not only its cognate tRNA(Asp) but also tRNA(Asn). Reaction proceeds in two steps: L-aspartate is first activated by ATP to form Asp-AMP and then transferred to the acceptor end of tRNA(Asp/Asn). This is Aspartate--tRNA(Asp/Asn) ligase from Jannaschia sp. (strain CCS1).